The chain runs to 502 residues: ATP synthase subunit beta (502 aa).

156–163 (GGAGVGKT) serves as a coordination point for ATP.

The protein belongs to the ATPase alpha/beta chains family. As to quaternary structure, F-type ATPases have 2 components, CF(1) - the catalytic core - and CF(0) - the membrane proton channel. CF(1) has five subunits: alpha(3), beta(3), gamma(1), delta(1), epsilon(1). CF(0) has three main subunits: a(1), b(2) and c(9-12). The alpha and beta chains form an alternating ring which encloses part of the gamma chain. CF(1) is attached to CF(0) by a central stalk formed by the gamma and epsilon chains, while a peripheral stalk is formed by the delta and b chains.

The protein localises to the cell membrane. The enzyme catalyses ATP + H2O + 4 H(+)(in) = ADP + phosphate + 5 H(+)(out). In terms of biological role, produces ATP from ADP in the presence of a proton gradient across the membrane. The catalytic sites are hosted primarily by the beta subunits. In Cellulophaga lytica (Cytophaga lytica), this protein is ATP synthase subunit beta.